The chain runs to 793 residues: Splicing factor 3A subunit 1 (793 aa).

The disordered stretch occupies residues 1-42; sequence MPAGPVQAVPPPPPAATEPKQPTEEEASSKEDSTPSKPVVGI. Residue Lys20 forms a Glycyl lysine isopeptide (Lys-Gly) (interchain with G-Cter in SUMO2) linkage. Basic and acidic residues predominate over residues 21-34; it reads QPTEEEASSKEDST. Residues 52 to 94 form an SURP motif 1 repeat; the sequence is IVDKTASFVARNGPEFEARIRQNEINNPKFNFLNPNDPYHAYY. Lys55 carries the N6-acetyllysine modification. Residue Lys131 forms a Glycyl lysine isopeptide (Lys-Gly) (interchain with G-Cter in SUMO2) linkage. Residues 166 to 208 form an SURP motif 2 repeat; sequence VVKLTAQFVARNGRQFLTQLMQKEQRNYQFDFLRPQHSLFNYF. The disordered stretch occupies residues 318-412; sequence GESEEVEMEV…PAPAPDEYLV (95 aa). Phosphoserine occurs at positions 320, 329, and 359. 2 stretches are compositionally biased toward acidic residues: residues 320 to 334 and 354 to 364; these read SEEV…EEDE and DMDEGSDDEEE. The segment covering 368–384 has biased composition (pro residues); the sequence is VPPPPETPMPPPLPPTP. Basic and acidic residues predominate over residues 388 to 397; that stretch reads IVRKDYDPKA. Position 413 is a phosphoserine (Ser413). Lys424 participates in a covalent cross-link: Glycyl lysine isopeptide (Lys-Gly) (interchain with G-Cter in SUMO2). Ser451 is modified (phosphoserine). A Phosphotyrosine modification is found at Tyr456. Positions 488–502 are enriched in basic and acidic residues; sequence IGEEEIQKPEEKVTW. Disordered regions lie at residues 488-518, 530-584, and 666-685; these read IGEE…AAQA, HKAK…AMPP, and PMPP…SKKL. A Glycyl lysine isopeptide (Lys-Gly) (interchain with G-Cter in SUMO2) cross-link involves residue Lys499. Ser508 bears the Phosphoserine mark. The span at 509–518 shows a compositional bias: polar residues; sequence MARTQQAAQA. A Glycyl lysine isopeptide (Lys-Gly) (interchain with G-Cter in SUMO2) cross-link involves residue Lys542. Positions 563 to 572 are enriched in polar residues; the sequence is ATNIPSSAPP. Residues 666–675 are compositionally biased toward pro residues; sequence PMPPVHPPPP. Residues 680–702 form a required and sufficient for nuclear import region; that stretch reads PASKKLKTEDSLMPEEEFLRRNK. Lys686 participates in a covalent cross-link: Glycyl lysine isopeptide (Lys-Gly) (interchain with G-Cter in SUMO2). Positions 707–793 constitute a Ubiquitin-like domain; sequence IKVQVPNMQD…ALKERGGRKK (87 aa). Tyr759 is subject to Phosphotyrosine.

In terms of assembly, component of the 17S U2 SnRNP complex, a ribonucleoprotein complex that contains small nuclear RNA (snRNA) U2 and a number of specific proteins. Part of the SF3A subcomplex of the 17S U2 SnRNP complex which is composed of three subunits; SF3A3/SAP61, SF3A2/SAP62 and SF3A1/SAP114. SF3A associates with the splicing factor SF3B and a 12S RNA unit to form the mature 17S U2 small nuclear ribonucleoprotein complex (17S U2 snRNP). SF3A1 functions as a scaffold that interacts directly with both SF3A2 and SF3A3. Identified in the spliceosome 'E' complex, a precursor of the spliceosome 'A' complex. Identified in the spliceosome 'A' and 'B' complexes. Identified in the spliceosome 'C' complex. Interacts with P2RX6; resulting in a reduction of the splicing activity.

It localises to the nucleus. The protein localises to the nucleus speckle. Its function is as follows. Component of the 17S U2 SnRNP complex of the spliceosome, a large ribonucleoprotein complex that removes introns from transcribed pre-mRNAs. The 17S U2 SnRNP complex (1) directly participates in early spliceosome assembly and (2) mediates recognition of the intron branch site during pre-mRNA splicing by promoting the selection of the pre-mRNA branch-site adenosine, the nucleophile for the first step of splicing. Within the 17S U2 SnRNP complex, SF3A1 is part of the SF3A subcomplex that contributes to the assembly of the 17S U2 snRNP, and the subsequent assembly of the pre-spliceosome 'E' complex and the pre-catalytic spliceosome 'A' complex. Involved in pre-mRNA splicing as a component of pre-catalytic spliceosome 'B' complexes. The sequence is that of Splicing factor 3A subunit 1 (SF3A1) from Bos taurus (Bovine).